The sequence spans 104 residues: NADH-quinone oxidoreductase subunit K (104 aa).

3 consecutive transmembrane segments (helical) span residues 4–24 (VAYY…AFLI), 28–48 (IITI…SFVA), and 64–84 (IFVF…LAII).

This sequence belongs to the complex I subunit 4L family. NDH-1 is composed of 14 different subunits. Subunits NuoA, H, J, K, L, M, N constitute the membrane sector of the complex.

It is found in the cell inner membrane. It carries out the reaction a quinone + NADH + 5 H(+)(in) = a quinol + NAD(+) + 4 H(+)(out). Its function is as follows. NDH-1 shuttles electrons from NADH, via FMN and iron-sulfur (Fe-S) centers, to quinones in the respiratory chain. The immediate electron acceptor for the enzyme in this species is believed to be ubiquinone. Couples the redox reaction to proton translocation (for every two electrons transferred, four hydrogen ions are translocated across the cytoplasmic membrane), and thus conserves the redox energy in a proton gradient. The sequence is that of NADH-quinone oxidoreductase subunit K from Acidobacterium capsulatum (strain ATCC 51196 / DSM 11244 / BCRC 80197 / JCM 7670 / NBRC 15755 / NCIMB 13165 / 161).